The sequence spans 362 residues: Peptide chain release factor 1 (362 aa).

Gln-235 carries the N5-methylglutamine modification.

Belongs to the prokaryotic/mitochondrial release factor family. In terms of processing, methylated by PrmC. Methylation increases the termination efficiency of RF1.

The protein localises to the cytoplasm. Its function is as follows. Peptide chain release factor 1 directs the termination of translation in response to the peptide chain termination codons UAG and UAA. The chain is Peptide chain release factor 1 from Acinetobacter baylyi (strain ATCC 33305 / BD413 / ADP1).